Here is a 129-residue protein sequence, read N- to C-terminus: Thioredoxin-like 3-3 (129 aa).

The segment covering 1-10 has biased composition (basic and acidic residues); the sequence is MEEGEAKKTG. Residues 1 to 30 are disordered; the sequence is MEEGEAKKTGLEGTGLSLPGSSHGNLRSAG. The Thioredoxin domain maps to 7–129; sequence KKTGLEGTGL…RLHDRLWLHS (123 aa). Over residues 19 to 30 the composition is skewed to polar residues; the sequence is PGSSHGNLRSAG. Residues cysteine 58 and cysteine 61 each act as nucleophile in the active site. Cysteine 58 and cysteine 61 are disulfide-bonded.

It belongs to the thioredoxin family.

Its function is as follows. Probable thiol-disulfide oxidoreductase that may participate in various redox reactions. This chain is Thioredoxin-like 3-3, found in Oryza sativa subsp. japonica (Rice).